Reading from the N-terminus, the 1469-residue chain is MDYNPNLPPLGGGGVSMRRSISRSVSRASRNIEDIFSSGSRRTQSVNDDEEALKWAAIEKLPTYSRLRTTLMNAVVEDDVYGNQLMSKEVDVTKLDGEDRQKFIDMVFKVAEQDNERILTKLRNRIDRVGIKLPTVEVRYEHLTIKADCYTGNRSLPTLLNVVRNMGESALGMIGIQFAKKAQLTILKDISGVIKPGRMTLLLGPPSSGKTTLLLALAGKLDKSLQVSGDITYNGYQLDEFVPRKTSAYISQNDLHVGIMTVKETLDFSARCQGVGTRYDLLNELARREKDAGIFPEADVDLFMKASAAQGVKNSLVTDYTLKILGLDICKDTIVGDDMMRGISGGQKKRVTTGEMIVGPTKTLFMDEISTGLDSSTTFQIVKCLQQIVHLNEATVLMSLLQPAPETFDLFDDIILVSEGQIVYQGPRDNILEFFESFGFKCPERKGTADFLQEVTSKKDQEQYWVNPNRPYHYIPVSEFASRYKSFHVGTKMSNELAVPFDKSRGHKAALVFDKYSVSKRELLKSCWDKEWLLMQRNAFFYVFKTVQIVIIAAITSTLFLRTEMNTRNEGDANLYIGALLFGMIINMFNGFAEMAMMVSRLPVFYKQRDLLFYPSWTFSLPTFLLGIPSSILESTAWMVVTYYSIGFAPDASRFFKQFLLVFLIQQMAASLFRLIASVCRTMMIANTGGALTLLLVFLLGGFLLPKGKIPDWWGWAYWVSPLTYAFNGLVVNEMFAPRWMNKMASSNSTIKLGTMVLNTWDVYHQKNWYWISVGALLCFTALFNILFTLALTYLNPLGKKAGLLPEEENEDADQGKDPMRRSLSTADGNRRGEVAMGRMSRDSAAEASGGAGNKKGMVLPFTPLAMSFDDVKYFVDMPGEMRDQGVTETRLQLLKGVTGAFRPGVLTALMGVSGAGKTTLMDVLAGRKTGGYIEGDVRISGFPKVQETFARISGYCEQTDIHSPQVTVRESLIFSAFLRLPKEVGKDEKMMFVDQVMELVELDSLRDSIVGLPGVTGLSTEQRKRLTIAVELVANPSIIFMDEPTSGLDARAAAIVMRAVRNTVDTGRTVVCTIHQPSIDIFEAFDELMLMKRGGQVIYAGPLGQNSHKVVEYFESFPGVSKIPEKYNPATWMLEASSLAAELKLSVDFAELYNQSALHQRNKALVKELSVPPAGASDLYFATQFSQNTWGQFKSCLWKQWWTYWRSPDYNLVRFIFTLATSLLIGTVFWQIGGNRSNAGDLTMVIGALYAAIIFVGINNCSTVQPMVAVERTVFYRERAAGMYSAMPYAISQVTCELPYVLIQTVYYSLIVYAMVGFEWKAEKFFWFVFVSYFSFLYWTYYGMMTVSLTPNQQVASIFASAFYGIFNLFSGFFIPRPKIPKWWIWYYWICPVAWTVYGLIVSQYGDVETRIQVLGGAPDLTVKQYIEDHYGFQSDFMGPVAAVLIAFTVFFAFIFAFCIRTLNFQTR.

Met1 carries the N-acetylmethionine modification. A phosphoserine mark is found at Ser37, Ser38, and Ser40. Thr43 is modified (phosphothreonine). The residue at position 45 (Ser45) is a Phosphoserine. Residues Leu171 to Glu444 enclose the ABC transporter 1 domain. An ATP-binding site is contributed by Gly204–Thr211. The ABC transmembrane type-2 1 domain occupies Glu522–Met735. The next 7 helical transmembrane spans lie at Phe540–Phe560, Leu575–Met595, Leu621–Val641, Phe659–Val679, Ile685–Leu705, Trp713–Asn733, and Ile772–Leu792. Positions Pro806–Ala852 are disordered. 3 positions are modified to phosphoserine: Ser825, Ser841, and Ser844. Positions Gly829–Ala845 are enriched in basic and acidic residues. Positions Met867–Pro1119 constitute an ABC transporter 2 domain. Gly912–Thr919 serves as a coordination point for ATP. Residues Gly1192–Tyr1406 enclose the ABC transmembrane type-2 2 domain. 7 helical membrane passes run Phe1216–Asn1236, Asn1239–Ile1259, Leu1299–Phe1319, Phe1326–Met1346, Val1356–Ile1376, Trp1384–Ser1404, and Pro1441–Ile1461.

The protein belongs to the ABC transporter superfamily. ABCG family. PDR (TC 3.A.1.205) subfamily. As to quaternary structure, interacts, in a Ca(2+)-dependent manner, with calmodulins CaM3, CaM7 and several CaM-like proteins (CML8, CML9, CML12/CAL4, CML37 and CML38), as well as with calcium regulated proteins CBL4/SOS3 and KIC. Phosphorylated upon perception of pathogen-associated molecular patterns (PAMPs); phosphorylations at Ser-40 and Ser-45, which likely regulate transport activity, are required for plant defense against pathogens (e.g. Blumeria graminis), but dispensable for recruitment to the host-pathogen interface and penetration sites. Phosphorylation at Ser-841 seems to be required for protein stability. In terms of tissue distribution, ubiquitous (at protein level). Higher levels in root hairs, stomata, epidermal cells, and hydathodes. Concentrated at the infection site of infected plants, including papillae and haustoria. Accumulates at the periphery of lateral root cap and root epidermal cells, especially in the outer lateral membrane domain facing the environment.

It localises to the cell membrane. The protein resides in the golgi apparatus. The protein localises to the trans-Golgi network membrane. Its subcellular location is the endoplasmic reticulum membrane. Its function is as follows. Together with ABCG37, regulates auxin homeostasis and responses by playing a dual role in coumarin (e.g. esculin) and in the auxin precursor indole 3-butyric acid (IBA) efflux transport, thus influencing cotyledons, roots and root hairs development. Mediates the transport (export into the apoplast) of distinct indole-type metabolites in distinct biological processes; a precursor of 4-O-beta-D-glucosyl-indol-3-yl formamide (4OGlcI3F), a pathogen-inducible tryptophan-derived compound (e.g. upon Blumeria graminis conidiospore inoculation), being a probable substrate in extracellular pathogen defense. Involved in the cellular detoxification of xenobiotics by promoting the excretion of some auxinic herbicides including 4-(2,4-dichlorophenoxy)butyric acid (2,4-DB) and other members of the phenoxyalkanoic acid family but not 2,4-dichlorophenoxyacetic acid (2,4-D). Mediates thymidine exudation in the rhizosphere. May be a transporter of lignin precursors during tracheary element differentiation. Key factor that controls the extent of cell death in the defense response. Necessary for both callose deposition and glucosinolate activation in response to pathogens. As a central component of nonhost resistance (NHR), required for limiting invasion by nonadapted pathogens including powdery mildews (e.g. Blumeria graminis and Erysiphe pisi), root-penetrating pathogenic fungi (e.g. Fusarium oxysporum), Phakopsora pachyrhizi and Colletotrichum gloeosporioides (anthracnose fungi), probably by sensing Ca(2+) via interactions with calmodulins (e.g. CaM7). Confers resistance to cadmium (Cd) and lead (Pb), probably as an efflux pump of Cd2+ or Cd conjugates, and possibly, of chemicals that mediate pathogen resistance. Promotes resistance to abiotic stresses (e.g. drought and salt stress) and favors general growth by preventing sodium accumulation in plants. Required for microbe-associated molecular patterns (MAMPs)- and salicylic acid (SA)-dependent hypersensitive cell death (HR), involving indole glucosinolate breakdown products (e.g. indole-3-acetonitrile), probably in a PEN2 myrosinase-dependent metabolic pathway, triggered by the recognition of effectors from incompatible pathogens including oomycetes and bacteria (e.g. AvrRpm1 and AvrRps4) and benzothiadiazole- (BTH), and leading to an induced protection against pathogens (e.g. Pseudomonas syringae pv. tomato DC3000, Golovinomyces orontii and Hyaloperonospora arabidopsidis). This Arabidopsis thaliana (Mouse-ear cress) protein is ABC transporter G family member 36.